Consider the following 262-residue polypeptide: Serine/arginine-rich splicing factor 10 (262 aa).

The RRM domain occupies Thr-10–Gly-88. 3 positions are modified to phosphoserine: Ser-23, Ser-106, and Ser-108. The span at Tyr-116–Arg-126 shows a compositional bias: basic and acidic residues. The tract at residues Tyr-116–His-262 is disordered. Phosphoserine is present on residues Ser-129, Ser-131, and Ser-133. Positions Phe-134–Thr-150 are enriched in low complexity. Residues Ser-158, Ser-160, and Arg-168 each carry the phosphoserine modification. Basic residues-rich tracts occupy residues Phe-165–Gln-186 and Lys-194–Gly-207. Over residues Ser-209 to Arg-234 the composition is skewed to basic and acidic residues. A compositionally biased stretch (low complexity) spans Arg-252 to His-262.

The protein belongs to the splicing factor SR family. The phosphorylated but not the dephosphorylated form interacts with TRA2B/SFRS10. The dephosphorylated form interacts with SNRNP70. Isoform 1 interacts with FUS C-terminus. Isoform 3 interacts with FUS C-terminus. Interacts with YTHDC1, leading to inhibit RNA-binding activity of SRSF10. Phosphorylated. Fully dephosphorylated in mitosis and partially dephosphorylated on heat shock. As to expression, widely expressed.

The protein localises to the nucleus speckle. It localises to the cytoplasm. Its function is as follows. Splicing factor that in its dephosphorylated form acts as a general repressor of pre-mRNA splicing. Seems to interfere with the U1 snRNP 5'-splice recognition of SNRNP70. Required for splicing repression in M-phase cells and after heat shock. Also acts as a splicing factor that specifically promotes exon skipping during alternative splicing. Interaction with YTHDC1, a RNA-binding protein that recognizes and binds N6-methyladenosine (m6A)-containing RNAs, prevents SRSF10 from binding to its mRNA-binding sites close to m6A-containing regions, leading to inhibit exon skipping during alternative splicing. May be involved in regulation of alternative splicing in neurons, with isoform 1 acting as a positive and isoform 3 as a negative regulator. The chain is Serine/arginine-rich splicing factor 10 (SRSF10) from Homo sapiens (Human).